The sequence spans 85 residues: Delta/kappa-theraphotoxin-Pm1a (85 aa).

An N-terminal signal peptide occupies residues 1–19 (MKTFVFIVLVALAFVLTAA). The propeptide occupies 20–43 (KEERANPSELVSALAELVMLDAER). Cystine bridges form between Cys50/Cys64, Cys57/Cys69, and Cys63/Cys77.

Belongs to the neurotoxin 10 (Hwtx-1) family. Expressed by the venom gland.

It localises to the secreted. Its function is as follows. Multimodal toxin that enhances nociceptor excitability mainly by the simultaneous stimulation of repetitive firing (through Nav1.8/SCN10A channel current enhancement) and impairment of repolarization (by inhibiting delayed rectifier current of Kv2.1/KCNB1), with a potential contribution from tetrodotoxin-sensitive voltage-gated sodium channels (Nav) modified excitability. Enhances Nav1.8/SCN10A currents (EC(50)=1.1 uM), modifies the channel gating by a right-shift in steady-state inactivation and delays open-state inactivation. Also decreases Kv2.1/KCNB1 currents (IC(50)=0.43 uM) and causes a depolarizing shift in the voltage dependence of activation without change in steady-state inactivation. In addition, inhibits peak currents of human sodium channels (Nav1.1 to Nav1.7, IC(50)=0.38-2.3 uM) and delays fast inactivation of Nav1.1/SCN1A, Nav1.3/SCN3A, Nav1.6/SCN8A, and Nav1.7/SCN9A. In small dorsal root ganglion neurons, induces hyperexcitability by enhancing tetrodotoxin-resistant sodium currents, impairing repolarization and lowering the threshold of action potential firing, consistent with the severe pain associated with envenomation. In vivo, elicits nocifensive behavior in mice after intraplantar injection. This is Delta/kappa-theraphotoxin-Pm1a from Pelinobius muticus (King baboon spider).